The following is a 559-amino-acid chain: Cytoplasmic polyadenylation element-binding protein 1 (559 aa).

Residues 222 to 243 (SRMDHSSSPLTPPPSASPSGSL) form a disordered region. RRM domains follow at residues 304–401 (CKVF…DAQV) and 423–504 (NTVF…PYLE). Residues Cys508, Cys511, Cys520, Cys525, Cys530, Cys533, His538, and His546 each coordinate Zn(2+).

This sequence belongs to the RRM CPEB family. In terms of tissue distribution, expressed in oocytes (at protein level). During oocyte maturation becomes detectable at stage Ib, and remains ubiquitously distributed within the oocyte cytoplasm until stage II. It then follows a gradual accumulation to the future animal pole during stage III, and remains localized to this pole at stage IV (at protein level). Expressed in oocytes, blastomeres and pre-mid-blastula transition embryos. Its expression during oogenesis is ubiquitous at stages I and II, but gradually accumulated at the periphery of the oocyte in the presumptive animal pole during stage III. Expression was maintained in that region at stage IV, and then became delocalized at stage V to cover a much broader area presumably encompassing the future blastodisc.

It localises to the cytoplasm. Functionally, sequence-specific RNA-binding protein that regulates mRNA cytoplasmic polyadenylation and translation initiation during oocyte maturation and early development. Binds to the cytoplasmic polyadenylation element (CPE), an uridine-rich sequence element (consensus sequence 5'-UUUUUAU-3') within the mRNA 3'-UTR. The polypeptide is Cytoplasmic polyadenylation element-binding protein 1 (cpeb1) (Danio rerio (Zebrafish)).